A 44-amino-acid polypeptide reads, in one-letter code: Protein non-structural 7b (44 aa).

The helical transmembrane segment at phenylalanine 9–tryptophan 29 threads the bilayer.

The protein resides in the host membrane. This chain is Protein non-structural 7b, found in Homo sapiens (Human).